The following is a 230-amino-acid chain: MKGILGKKVGMSQLFTTEGIAIPVSIIEVPENIVTKIITKEKNSYDAIQLAAFDKKQSRFLKPEIGHFAKANTKPKRFIKEFRDFQGYKLGQTVDVSIFSPGEFVDVTGTSKGKGFAGTIKRYNQAIGPRSHGGGGGSKPIRQTGSLGDISGNKVVKGMTMPGRLGHEKVTKQSLEIIKVDKENNLLVLKGSVPGPKKSFLVIKSAIKKPNPKNPVSLFVPNSDKEVKNE.

Disordered regions lie at residues 125 to 149 (QAIG…SLGD) and 210 to 230 (PNPK…VKNE).

The protein belongs to the universal ribosomal protein uL3 family. In terms of assembly, part of the 50S ribosomal subunit. Forms a cluster with proteins L14 and L19.

One of the primary rRNA binding proteins, it binds directly near the 3'-end of the 23S rRNA, where it nucleates assembly of the 50S subunit. The chain is Large ribosomal subunit protein uL3 from Mesomycoplasma hyopneumoniae (strain J / ATCC 25934 / NCTC 10110) (Mycoplasma hyopneumoniae).